We begin with the raw amino-acid sequence, 719 residues long: MLKLVQYIAPRVGGATPRPTACGWGNLLLISPRSGASSEKCITQRRHFLFSSASSSGTFASSSSLCTEQRQQFHGSRRNRETILFPSTYSSLQAQSQRAFRDSSKPDSDDYVDSIPKAEQRTRTRKSLFNDPDERTEEIKIEGVMAPHDRDFGHSGRGGRGGDRGGDDRRGGGGGGNRFGGGGGGGDYHGIRNGRVEKRRDDRGGGNRFGGGGGFGDRRGGGGGGSQDLPMRPVDFSNLAPFKKNFYQEHPNVANRSPYEVQRYREEQEITVRGQVPNPIQDFSEVHLPDYVMKEIRRQGYKAPTAIQAQGWPIAMSGSNFVGIAKTGSGKTLGYILPAIVHINNQQPLQRGDGPIALVLAPTRELAQQIQQVATEFGSSSYVRNTCVFGGAPKGGQMRDLQRGCEIVIATPGRLIDFLSAGSTNLKRCTYLVLDEADRMLDMGFEPQIRKIVSQIRPDRQTLMWSATWPKEVKQLAEDFLGNYIQINIGSLELSANHNIRQVVDVCDEFSKEEKLKTLLSDIYDTSESPGKIIIFVETKRRVDNLVRFIRSFGVRCGAIHGDKSQSERDFVLREFRSGKSNILVATDVAARGLDVDGIKYVINFDYPQNSEDYIHRIGRTGRSNTKGTSFAFFTKNNAKQAKALVDVLREANQEINPALENLARNSRYDGGGGRSRYGGGGGGGRFGGGGFKKGSLSNGRGFGGGGGGGGEGRHSRFD.

The disordered stretch occupies residues 94–234 (AQSQRAFRDS…GSQDLPMRPV (141 aa)). Basic and acidic residues-rich tracts occupy residues 99–108 (AFRDSSKPDS) and 137–171 (EEIK…DRRG). Positions 172–188 (GGGGGNRFGGGGGGGDY) are enriched in gly residues. The span at 194-205 (GRVEKRRDDRGG) shows a compositional bias: basic and acidic residues. The span at 206-226 (GNRFGGGGGFGDRRGGGGGGS) shows a compositional bias: gly residues. The Q motif signature appears at 281-309 (QDFSEVHLPDYVMKEIRRQGYKAPTAIQA). The region spanning 312–487 (WPIAMSGSNF…EDFLGNYIQI (176 aa)) is the Helicase ATP-binding domain. Residue 325–332 (AKTGSGKT) coordinates ATP. The DEAD box motif lies at 435–438 (DEAD). A Helicase C-terminal domain is found at 519–664 (LLSDIYDTSE…EINPALENLA (146 aa)). Positions 689-719 (GGGFKKGSLSNGRGFGGGGGGGGEGRHSRFD) are disordered. Residues 701–711 (RGFGGGGGGGG) show a composition bias toward gly residues.

This sequence belongs to the DEAD box helicase family. DDX5/DBP2 subfamily. As to quaternary structure, interacts with Fmr1 to form the RNA-induced silencing complex (RISC), a ribonucleoprotein (RNP) complex involved in translation regulation, other components of the complex are RpL5, RpL11, AGO2 and Dcr-1.

It is found in the nucleus. The protein resides in the nucleolus. It localises to the cytoplasm. The protein localises to the cytosol. The enzyme catalyses ATP + H2O = ADP + phosphate + H(+). In terms of biological role, as an RNA helicase, unwinds RNA and alters RNA structures through ATP binding and hydrolysis. Involved in multiple cellular processes, including pre-mRNA splicing, alternative splicing, rRNA processing and miRNA processing, as well as transcription regulation. Plays a role in innate immunity. Specifically restricts bunyavirus infection, including Rift Valley fever virus (RVFV) or La Crosse virus (LACV), but not vesicular stomatitis virus (VSV), in an interferon- and DROSHA-independent manner. This Drosophila melanogaster (Fruit fly) protein is ATP-dependent RNA helicase p62 (Rm62).